The chain runs to 280 residues: Elongation factor Ts (280 aa).

The interval threonine 79 to valine 82 is involved in Mg(2+) ion dislocation from EF-Tu.

It belongs to the EF-Ts family.

It localises to the cytoplasm. In terms of biological role, associates with the EF-Tu.GDP complex and induces the exchange of GDP to GTP. It remains bound to the aminoacyl-tRNA.EF-Tu.GTP complex up to the GTP hydrolysis stage on the ribosome. The chain is Elongation factor Ts from Vibrio vulnificus (strain CMCP6).